We begin with the raw amino-acid sequence, 154 residues long: 6,7-dimethyl-8-ribityllumazine synthase (154 aa).

Residues Phe22, 56-58 (AFE), and 81-83 (VLI) contribute to the 5-amino-6-(D-ribitylamino)uracil site. 86-87 (ET) is a (2S)-2-hydroxy-3-oxobutyl phosphate binding site. His89 acts as the Proton donor in catalysis. Leu114 serves as a coordination point for 5-amino-6-(D-ribitylamino)uracil. Arg128 serves as a coordination point for (2S)-2-hydroxy-3-oxobutyl phosphate.

Belongs to the DMRL synthase family.

It carries out the reaction (2S)-2-hydroxy-3-oxobutyl phosphate + 5-amino-6-(D-ribitylamino)uracil = 6,7-dimethyl-8-(1-D-ribityl)lumazine + phosphate + 2 H2O + H(+). It participates in cofactor biosynthesis; riboflavin biosynthesis; riboflavin from 2-hydroxy-3-oxobutyl phosphate and 5-amino-6-(D-ribitylamino)uracil: step 1/2. Its function is as follows. Catalyzes the formation of 6,7-dimethyl-8-ribityllumazine by condensation of 5-amino-6-(D-ribitylamino)uracil with 3,4-dihydroxy-2-butanone 4-phosphate. This is the penultimate step in the biosynthesis of riboflavin. The sequence is that of 6,7-dimethyl-8-ribityllumazine synthase from Chlamydia pneumoniae (Chlamydophila pneumoniae).